Here is a 95-residue protein sequence, read N- to C-terminus: Putative pterin-4-alpha-carbinolamine dehydratase (95 aa).

Belongs to the pterin-4-alpha-carbinolamine dehydratase family.

It catalyses the reaction (4aS,6R)-4a-hydroxy-L-erythro-5,6,7,8-tetrahydrobiopterin = (6R)-L-erythro-6,7-dihydrobiopterin + H2O. The protein is Putative pterin-4-alpha-carbinolamine dehydratase of Thermosynechococcus vestitus (strain NIES-2133 / IAM M-273 / BP-1).